Reading from the N-terminus, the 541-residue chain is Glucose-6-phosphate isomerase (541 aa).

Glu346 serves as the catalytic Proton donor. Catalysis depends on residues His377 and Lys506.

Belongs to the GPI family.

It is found in the cytoplasm. The enzyme catalyses alpha-D-glucose 6-phosphate = beta-D-fructose 6-phosphate. It functions in the pathway carbohydrate biosynthesis; gluconeogenesis. The protein operates within carbohydrate degradation; glycolysis; D-glyceraldehyde 3-phosphate and glycerone phosphate from D-glucose: step 2/4. In terms of biological role, catalyzes the reversible isomerization of glucose-6-phosphate to fructose-6-phosphate. The protein is Glucose-6-phosphate isomerase of Sinorhizobium medicae (strain WSM419) (Ensifer medicae).